Here is a 530-residue protein sequence, read N- to C-terminus: Glutamate--cysteine ligase (530 aa).

Belongs to the glutamate--cysteine ligase type 1 family. Type 1 subfamily.

The enzyme catalyses L-cysteine + L-glutamate + ATP = gamma-L-glutamyl-L-cysteine + ADP + phosphate + H(+). It participates in sulfur metabolism; glutathione biosynthesis; glutathione from L-cysteine and L-glutamate: step 1/2. This chain is Glutamate--cysteine ligase, found in Pseudomonas entomophila (strain L48).